The chain runs to 88 residues: LYR motif-containing protein 2 (88 aa).

The N-terminal 19 residues, 1-19 (MAVSRLPPAALSLKQFLQR), are a transit peptide targeting the mitochondrion.

This sequence belongs to the complex I LYR family.

It localises to the mitochondrion. Functionally, involved in efficient integration of the N-module into mitochondrial respiratory chain complex I. The polypeptide is LYR motif-containing protein 2 (lyrm2) (Danio rerio (Zebrafish)).